The primary structure comprises 155 residues: MNYLKLTFDKLEVGEINDLVAHESCGAISLFVGTTRDNFDGKTVVLLEYEAYEAMALKTMNQICEELRARWPDIKHIGIHHRLGTVPVKEASVVIAVSSPHRKSSLEAVHFAIDELKKSVPVWKKEQYADGEGCSEWKENKECSWSKSHRDNHIL.

Substrate is bound by residues 101-102, lysine 117, and 124-126; these read HR and KKE.

The protein belongs to the MoaE family. MOCS2B subfamily. Heterotetramer; composed of 2 small (MOCS2A) and 2 large (MOCS2B) subunits.

It localises to the cytoplasm. The enzyme catalyses 2 [molybdopterin-synthase sulfur-carrier protein]-C-terminal-Gly-aminoethanethioate + cyclic pyranopterin phosphate + H2O = molybdopterin + 2 [molybdopterin-synthase sulfur-carrier protein]-C-terminal Gly-Gly + 2 H(+). Its pathway is cofactor biosynthesis; molybdopterin biosynthesis. Catalytic subunit of the molybdopterin synthase complex, a complex that catalyzes the conversion of precursor Z into molybdopterin. Acts by mediating the incorporation of 2 sulfur atoms from thiocarboxylated MOCS2A into precursor Z to generate a dithiolene group. The protein is Molybdopterin synthase catalytic subunit 1 of Aedes aegypti (Yellowfever mosquito).